The following is a 435-amino-acid chain: Monodehydroascorbate reductase 4, cytosolic (435 aa).

FAD is bound by residues 14 to 17 (GGVA), E41, R48, K53, I96, and 147 to 148 (RD). NAD(+) is bound by residues 172-178 (GGYIGLE), E196, R202, and G261. 174–178 (YIGLE) is a binding site for NADP(+). 2 residues coordinate NADP(+): R202 and G261. D298 is an FAD binding site. 314–315 (EH) is an NAD(+) binding site. NADP(+) is bound at residue 314–315 (EH). An FAD-binding site is contributed by V316. R320 is a binding site for L-ascorbate. Residue Y349 participates in FAD binding. Y349 contacts NAD(+). Y349 lines the NADP(+) pocket. R351 contributes to the L-ascorbate binding site.

It belongs to the FAD-dependent oxidoreductase family. FAD serves as cofactor. As to expression, expressed in anthers.

It is found in the cytoplasm. It carries out the reaction 2 monodehydro-L-ascorbate radical + NADH + H(+) = 2 L-ascorbate + NAD(+). Catalyzes the conversion of monodehydroascorbate to ascorbate, oxidizing NADH in the process. Ascorbate is a major antioxidant against reactive oxygen species (ROS) and nitric oxide (NO). The sequence is that of Monodehydroascorbate reductase 4, cytosolic from Oryza sativa subsp. japonica (Rice).